A 448-amino-acid chain; its full sequence is RuvB-like 2 (448 aa).

An ATP-binding site is contributed by 73 to 80; the sequence is GEPGAGKT.

It belongs to the RuvB family. As to quaternary structure, forms homohexameric rings. May form a dodecamer with ruvb-1 made of two stacked hexameric rings. As to expression, expressed in gonadal cells.

The protein resides in the cytoplasm. It is found in the nucleus. It catalyses the reaction ATP + H2O = ADP + phosphate + H(+). Possesses single-stranded DNA-stimulated ATPase and ATP-dependent DNA helicase (5' to 3') activity suggesting a role in nuclear processes such as recombination and transcription. May participate in several chromatin remodeling complexes that mediate the ATP-dependent exchange of histones and remodel chromatin by shifting nucleosomes. Involvement in these complexes is likely required for transcriptional activation of selected genes and DNA repair in response to DNA damage. Has a role in gonadal development. Involved in the endoplasmic reticulum (ER)-associated degradation (ERAD) pathway where it negatively regulates expression of ER stress response genes. Specifically, negatively controls the expression of ER homeostasis regulator ckb-2 in a cdc-48.1/2-dependent manner. The protein is RuvB-like 2 of Caenorhabditis elegans.